Consider the following 91-residue polypeptide: Early E3B 10.4 kDa protein (91 aa).

The N-terminal stretch at methionine 1–alanine 21 is a signal peptide. The Lumenal segment spans residues alanine 22–proline 33. Residues phenylalanine 34–isoleucine 56 traverse the membrane as a helical segment. Over threonine 57 to proline 91 the chain is Cytoplasmic.

It belongs to the adenoviridae E3B family.

The protein resides in the host endoplasmic reticulum membrane. Its function is as follows. Down-regulates the EGF receptor. This is Early E3B 10.4 kDa protein from Homo sapiens (Human).